The primary structure comprises 271 residues: Ferric vulnibactin reductase VuuB (271 aa).

One can recognise an FAD-binding FR-type domain in the interval 8–131; that stretch reads VYPMLLDFVR…IGPAGPDPLI (124 aa).

The protein belongs to the SIP oxidoreductase family. Monomer. FAD is required as a cofactor.

It localises to the cytoplasm. The catalysed reaction is 2 a Fe(II)-siderophore + NAD(+) + H(+) = 2 a Fe(III)-siderophore + NADH. In terms of biological role, ferric-siderophore reductase involved in iron removal from the siderophores after their transport into the cell. Acts as a major ferric-vulnibactin reductase catalyzing the reduction of Fe(3+)-vulnibactin, a catecholate siderophore synthesized by V.vulnificus. Catalyzes reduction of Fe(3+)-aerobactin, a citrate-hydroxamate siderophore produced by other bacteria, in the absence of IutB. Catalyzes reduction of Fe(3+)-vibriobactin in vitro. No activity with ferrioxamine B or Fe(3+)-enterobactin. Catalyzes reduction of ferric chelating compounds Fe(3+)-nitrilotriacetic acid (NTA), Fe(3+)-citrate and Fe(3+)-EDTA as well as non-complexed FeCl3 in the presence of NADH as its electron donor and FAD as its cofactor in vitro. Highest activity with Fe(3+)-NTA as electron acceptor. This chain is Ferric vulnibactin reductase VuuB, found in Vibrio vulnificus.